The primary structure comprises 418 residues: Serine protease inhibitor A3K (418 aa).

Positions Met-1–Cys-21 are cleaved as a signal peptide. N-linked (GlcNAc...) asparagine glycans are attached at residues Asn-39, Asn-105, Asn-185, and Asn-270. The interval Gly-369–Arg-394 is RCL.

Belongs to the serpin family. Expressed in liver and secreted in plasma.

Its subcellular location is the secreted. Functionally, contrapsin inhibits trypsin-like proteases. In Mus musculus (Mouse), this protein is Serine protease inhibitor A3K (Serpina3k).